Here is a 183-residue protein sequence, read N- to C-terminus: Orotate phosphoribosyltransferase (183 aa).

5-phospho-alpha-D-ribose 1-diphosphate is bound by residues Arg-90, Lys-91, Lys-94, and 115 to 123; that span reads DDVATTGGS. Residues Thr-119 and Arg-147 each coordinate orotate.

It belongs to the purine/pyrimidine phosphoribosyltransferase family. PyrE subfamily. As to quaternary structure, homodimer. The cofactor is Mg(2+).

It carries out the reaction orotidine 5'-phosphate + diphosphate = orotate + 5-phospho-alpha-D-ribose 1-diphosphate. Its pathway is pyrimidine metabolism; UMP biosynthesis via de novo pathway; UMP from orotate: step 1/2. In terms of biological role, catalyzes the transfer of a ribosyl phosphate group from 5-phosphoribose 1-diphosphate to orotate, leading to the formation of orotidine monophosphate (OMP). This chain is Orotate phosphoribosyltransferase, found in Methanopyrus kandleri (strain AV19 / DSM 6324 / JCM 9639 / NBRC 100938).